We begin with the raw amino-acid sequence, 416 residues long: Tyrosine--tRNA ligase (416 aa).

Tyr-40 serves as a coordination point for L-tyrosine. Positions 45–54 (ATAASLHVGH) match the 'HIGH' region motif. Residues Tyr-177 and Gln-181 each contribute to the L-tyrosine site. The 'KMSKS' region motif lies at 237-241 (KMGKS). An ATP-binding site is contributed by Lys-240. The region spanning 351–416 (LSVTHFLVAA…RKKHKLVRLA (66 aa)) is the S4 RNA-binding domain.

This sequence belongs to the class-I aminoacyl-tRNA synthetase family. TyrS type 1 subfamily. As to quaternary structure, homodimer.

The protein resides in the cytoplasm. It catalyses the reaction tRNA(Tyr) + L-tyrosine + ATP = L-tyrosyl-tRNA(Tyr) + AMP + diphosphate + H(+). In terms of biological role, catalyzes the attachment of tyrosine to tRNA(Tyr) in a two-step reaction: tyrosine is first activated by ATP to form Tyr-AMP and then transferred to the acceptor end of tRNA(Tyr). This Cereibacter sphaeroides (strain ATCC 17025 / ATH 2.4.3) (Rhodobacter sphaeroides) protein is Tyrosine--tRNA ligase.